The following is a 121-amino-acid chain: Large ribosomal subunit protein uL18 (121 aa).

It belongs to the universal ribosomal protein uL18 family. As to quaternary structure, part of the 50S ribosomal subunit; part of the 5S rRNA/L5/L18/L25 subcomplex. Contacts the 5S and 23S rRNAs.

In terms of biological role, this is one of the proteins that bind and probably mediate the attachment of the 5S RNA into the large ribosomal subunit, where it forms part of the central protuberance. This chain is Large ribosomal subunit protein uL18, found in Herpetosiphon aurantiacus (strain ATCC 23779 / DSM 785 / 114-95).